Here is a 997-residue protein sequence, read N- to C-terminus: Synaptonemal complex protein 1 (997 aa).

The Mediates head to head self-assembly of N-terminal ends motif lies at 102–112 (PMSRLYSKLYK). The Nuclear localization signal signature appears at 118-121 (KKWK). Coiled coils occupy residues 121-176 (KVSI…LIKE) and 212-696 (YVDL…KKIS). Residues 207 to 363 (ETRQVYVDLN…YQLTEEKEAQ (157 aa)) are interaction with SYCE3. Positions 698 to 792 (EKLLGEVEKA…VSLKKQLEVE (95 aa)) are required for pH-induced assembly of C-terminal ends into antiparallel tetramers. The short motif at 701–704 (LGEV) is the Nuclear localization signal element. The stretch at 768-806 (KVALETELSNIRNELVSLKKQLEVEKEEKEKLKMEQENT) forms a coiled coil. A DNA-binding region spans residues 805-997 (NTAILTDKKD…RLKEAEKLFT (193 aa)). Serine 824 is subject to Phosphoserine. Positions 828 to 863 (TSWKFDSKTTPSQNISRLSSSMDSGKSKDNRDSLRA) are disordered. Polar residues predominate over residues 835–851 (KTTPSQNISRLSSSMDS). Residues 852 to 861 (GKSKDNRDSL) are compositionally biased toward basic and acidic residues. The Nuclear localization signal motif lies at 902–905 (KKRK). Residue threonine 940 is modified to Phosphothreonine.

As to quaternary structure, structural component of synaptonemal complexes. Homotetramer that consists of an N-terminal four-helical bundle that bifurcates into two elongated C-terminal dimeric coiled coils. This tetrameric building block potentially self-assembles into a supramolecular zipper-like lattice to mediate meiotic chromosome synapsis. Self-assembly is likely initiated by local proton density at chromosome axis, which is predicted to trigger antiparallel back to back assembly of adjacent C-terminal ends into tetrameric structures that anchor to chromosomal DNA. Then the N-terminal ends are predicted to undergo cooperative antiparallel head to head assembly at the midline of synaptonemal complexes central element to form a zipper-like lattice between properly aligned homologous chromosomes. The nascent synapsis generated by SYCP1 is stabilized through interaction with central element proteins SYCE1 and SYCE2. Interacts (via tetrameric core) with SYCE3; the interaction remodels SYCP1 homotetramers to 2:1 heterotrimers with SYCE3. SYCP1/SYCE3 heterotrimers form lattice assemblies as part of the mature synaptonemal complex via both lateral and head-to-head interactions. Forms a complex with EWSR1, PRDM9, SYCP3 and REC8; complex formation is dependent of phosphorylated form of REC8 and requires PRDM9 bound to hotspot DNA; EWSR1 joins PRDM9 with the chromosomal axis through REC8. Interacts with SPO16. Testis.

The protein resides in the nucleus. Its subcellular location is the chromosome. It is found in the centromere. Its function is as follows. Major component of the transverse filaments of synaptonemal complexes, formed between homologous chromosomes during meiotic prophase. Required for normal assembly of the central element of the synaptonemal complexes. Required for normal centromere pairing during meiosis. Required for normal meiotic chromosome synapsis during oocyte and spermatocyte development and for normal male and female fertility. The sequence is that of Synaptonemal complex protein 1 from Rattus norvegicus (Rat).